We begin with the raw amino-acid sequence, 368 residues long: Mitogen-activated protein kinase KSS1 (368 aa).

Positions 13 to 313 (YKLVDLIGEG…AAEALRHPYL (301 aa)) constitute a Protein kinase domain. ATP-binding positions include 19-27 (IGEGAYGTV) and Lys42. Asp143 serves as the catalytic Proton acceptor. Thr183 is modified (phosphothreonine). Positions 183–185 (TEY) match the TXY motif. Tyr185 carries the post-translational modification Phosphotyrosine.

It belongs to the protein kinase superfamily. Ser/Thr protein kinase family. MAP kinase subfamily. HOG1 sub-subfamily. As to quaternary structure, in the nucleus, KSS1 forms a complex with DIG1, DIG2 and STE12; in contrast to FUS3 the interaction of KSS1 with STE12 does not depend on DIG1 and DIG2. Phosphorylated KSS1 shows reduced interaction with STE12. During pheromone activation and phosphorylation, KSS1 forms a membrane-associated complex with the scaffold protein STE5, the MAPKK STE7, the MAPKKK STE11, and the G-protein beta subunit GBB/STE4; interacting directly with POF1, STE7 and STE5 proteins. It depends on Mg(2+) as a cofactor. Dually phosphorylated on Thr-183 and Tyr-185 by STE7 in response to pheromone or carbon/nitrogen limitation, which activates the enzyme. Activated FUS3 down-regulates KSS1 phosphorylation.

Its subcellular location is the nucleus. It localises to the cytoplasm. It is found in the periplasm. It catalyses the reaction L-seryl-[protein] + ATP = O-phospho-L-seryl-[protein] + ADP + H(+). It carries out the reaction L-threonyl-[protein] + ATP = O-phospho-L-threonyl-[protein] + ADP + H(+). Its activity is regulated as follows. Activated by tyrosine and threonine phosphorylation after pheromone treatment or carbon/nitrogen limitation. In terms of biological role, together with closely related FUS3, KSS1 is the final kinase in the signal transduction cascade regulating activation/repression of the mating and filamentation pathways, induced by pheromone and nitrogen/carbon limitation, respectively. Phosphorylated KSS1 activates both pathways, whereas activated FUS3 activates the mating but suppresses the filamentation pathway. KSS1 activity is down-regulated by FUS3 during pheromone induction to prevent inappropriate activation of the filamentation pathway. During induction of filamentation, KSS1 activates the transcription factor STE12 resulting in its binding to and activation of filamentation specific genes. Non-activated KSS1 has a kinase-independent repressive effect on STE12 transcriptional activity, that is mediated by direct binding to STE12 and depends on the presence of DIG1 and DIG2, and that is required for the suppression of filamentation under normal growth conditions. SSN3/SRB10 contributes further to the suppression of filamentation under these conditions by reducing STE12 stability independent of KSS1. FUS3 can partially compensate for the lack of KSS1 but filamentation becomes constitutively induced at a low level in the absence of any signal. KSS1 phosphorylates STE7, STE5, FAR1, DIG1, DIG2, STE12, and SST2. The protein is Mitogen-activated protein kinase KSS1 (KSS1) of Saccharomyces cerevisiae (strain ATCC 204508 / S288c) (Baker's yeast).